A 268-amino-acid chain; its full sequence is 5'-nucleotidase SurE (268 aa).

A divalent metal cation is bound by residues D8, D9, S40, and N98.

Belongs to the SurE nucleotidase family. It depends on a divalent metal cation as a cofactor.

It localises to the cytoplasm. It carries out the reaction a ribonucleoside 5'-phosphate + H2O = a ribonucleoside + phosphate. In terms of biological role, nucleotidase that shows phosphatase activity on nucleoside 5'-monophosphates. This is 5'-nucleotidase SurE from Trichodesmium erythraeum (strain IMS101).